The chain runs to 24 residues: Bombinin (24 aa).

An Asparagine amide modification is found at Asn-24.

The protein belongs to the bombinin family. In terms of tissue distribution, expressed by the skin glands.

Its subcellular location is the secreted. Its function is as follows. Has antimicrobial and hemolytic activities. This Bombina variegata (Yellow-bellied toad) protein is Bombinin.